Reading from the N-terminus, the 628-residue chain is Leucine-rich repeat and fibronectin type-III domain-containing protein 3 (628 aa).

The signal sequence occupies residues 1 to 16 (MAILPLLLCLLPLAPA). At 17–539 (SSPPQSATPS…PHAPFLGGTM (523 aa)) the chain is on the extracellular side. Residues 19–59 (PPQSATPSPCPRRCRCQTQSLPLSVLCPGAGLLFVPPSLDR) form the LRRNT domain. LRR repeat units lie at residues 60-83 (RAAELRLADNFIASVRRRDLANMT), 84-105 (GLLHLSLSRNTIRHVAAGAFAD), 108-129 (ALRALHLDGNRLTSLGEGQLRG), 132-153 (NLRHLILSNNQLAALAAGALDD), 157-178 (TLEDLDLSYNNLEQLPWEALGR), 181-202 (NVNTLGLDHNLLASVPAGAFSR), and 205-226 (KLARLDMTSNRLTTIPPDPLFS). An N-linked (GlcNAc...) asparagine glycan is attached at Asn81. Residues 249 to 295 (NPLHCNCELVWLRRLAREDDLEACASPPALGGRYFWAVGEEEFVCEP) form the LRRCT domain. The region spanning 295 to 382 (PPVVTHRSPP…GEATAAVELT (88 aa)) is the Ig-like domain. Cysteines 317 and 366 form a disulfide. N-linked (GlcNAc...) asparagine glycosylation is found at Asn339, Asn348, and Asn393. The tract at residues 382-430 (TVGPPPPPQLANSTSCDPPRDGDPDALTPPSAASASAKVADTGPPTDRG) is disordered. Residues 406–422 (DALTPPSAASASAKVAD) are compositionally biased toward low complexity. The region spanning 425-523 (PPTDRGVQVT…GCARFSTEPA (99 aa)) is the Fibronectin type-III domain. Residue Asn462 is glycosylated (N-linked (GlcNAc...) asparagine). The chain crosses the membrane as a helical span at residues 540-560 (IIALGGVIVASVLVFIFVLLM). Residues 561 to 628 (RYKVHGGQPP…WGPGHEPVGP (68 aa)) lie on the Cytoplasmic side of the membrane.

This sequence belongs to the LRFN family. In terms of assembly, can form heteromeric complexes with LRFN1, LRFN2, LRFN4 and LRFN5. Able to form homomeric complexes across cell junctions, between adjacent cells. Does not interact with DLG4. In terms of processing, N-glycosylated.

Its subcellular location is the cell membrane. The protein localises to the cell projection. The protein resides in the axon. It is found in the dendrite. It localises to the synapse. Its subcellular location is the presynaptic cell membrane. The protein localises to the postsynaptic cell membrane. Its function is as follows. Cell adhesion molecule that mediates homophilic cell-cell adhesion in a Ca(2+)-independent manner. Promotes neurite outgrowth in hippocampal neurons. In Homo sapiens (Human), this protein is Leucine-rich repeat and fibronectin type-III domain-containing protein 3 (LRFN3).